Consider the following 466-residue polypeptide: Small RNA degrading nuclease 2 (466 aa).

The Exonuclease domain maps to 142-298 (MIAIDCEMVL…HDAEAAMKLV (157 aa)). The segment at 426–466 (EENNASSKKRKRENHSKGTRDRRRCKPLSRRKQRSNVKRRR) is disordered. Basic residues predominate over residues 445–466 (RDRRRCKPLSRRKQRSNVKRRR).

Belongs to the REXO1/REXO3 family.

The protein localises to the nucleus. Its function is as follows. 3'-5' exonuclease degrading single-stranded small RNAs. The chain is Small RNA degrading nuclease 2 (SDN2) from Arabidopsis thaliana (Mouse-ear cress).